Consider the following 182-residue polypeptide: Orotate phosphoribosyltransferase (182 aa).

Residues R91, K92, K95, H97, and 117–125 contribute to the 5-phospho-alpha-D-ribose 1-diphosphate site; that span reads EDVTTTGGS. Orotate contacts are provided by T121 and R149.

The protein belongs to the purine/pyrimidine phosphoribosyltransferase family. PyrE subfamily. As to quaternary structure, homodimer. It depends on Mg(2+) as a cofactor.

The catalysed reaction is orotidine 5'-phosphate + diphosphate = orotate + 5-phospho-alpha-D-ribose 1-diphosphate. It participates in pyrimidine metabolism; UMP biosynthesis via de novo pathway; UMP from orotate: step 1/2. Catalyzes the transfer of a ribosyl phosphate group from 5-phosphoribose 1-diphosphate to orotate, leading to the formation of orotidine monophosphate (OMP). The protein is Orotate phosphoribosyltransferase of Pyrococcus abyssi (strain GE5 / Orsay).